The following is a 121-amino-acid chain: Cell division protein FtsL (121 aa).

Residues 1–34 (MISRVTEALSKVKGSIGSNERHALPGVIGDDLLR) are Cytoplasmic-facing. Residues 35–57 (FGKLPLCLFICIILTAVTVVTTA) traverse the membrane as a helical segment. At 58–121 (HHTRLLTAQR…PSQENIVVQK (64 aa)) the chain is on the periplasmic side.

Belongs to the FtsL family. Part of a complex composed of FtsB, FtsL and FtsQ.

Its subcellular location is the cell inner membrane. Its function is as follows. Essential cell division protein. May link together the upstream cell division proteins, which are predominantly cytoplasmic, with the downstream cell division proteins, which are predominantly periplasmic. This Salmonella typhimurium (strain LT2 / SGSC1412 / ATCC 700720) protein is Cell division protein FtsL.